The sequence spans 234 residues: Thymidylate kinase (234 aa).

Residue 11–18 (GLEGSGKT) participates in ATP binding.

This sequence belongs to the thymidylate kinase family.

The catalysed reaction is dTMP + ATP = dTDP + ADP. Functionally, phosphorylation of dTMP to form dTDP in both de novo and salvage pathways of dTTP synthesis. The polypeptide is Thymidylate kinase (Wigglesworthia glossinidia brevipalpis).